Reading from the N-terminus, the 50-residue chain is Protein PsbN (50 aa).

The chain crosses the membrane as a helical span at residues 14-34 (IAVTILAILLALTGFGLWSAF).

The protein belongs to the PsbN family.

It is found in the cellular thylakoid membrane. May play a role in photosystem I and II biogenesis. This chain is Protein PsbN, found in Prochlorococcus marinus (strain MIT 9215).